The sequence spans 84 residues: Small ribosomal subunit protein bS16 (84 aa).

Belongs to the bacterial ribosomal protein bS16 family.

The sequence is that of Small ribosomal subunit protein bS16 from Methylococcus capsulatus (strain ATCC 33009 / NCIMB 11132 / Bath).